Consider the following 415-residue polypeptide: Serine--tRNA ligase (415 aa).

Position 231–233 (231–233 (TAE)) interacts with L-serine. An ATP-binding site is contributed by 262–264 (RSE). E285 lines the L-serine pocket. 349–352 (EISS) contacts ATP. S383 contributes to the L-serine binding site.

Belongs to the class-II aminoacyl-tRNA synthetase family. Type-1 seryl-tRNA synthetase subfamily. In terms of assembly, homodimer. The tRNA molecule binds across the dimer.

The protein resides in the cytoplasm. It catalyses the reaction tRNA(Ser) + L-serine + ATP = L-seryl-tRNA(Ser) + AMP + diphosphate + H(+). The catalysed reaction is tRNA(Sec) + L-serine + ATP = L-seryl-tRNA(Sec) + AMP + diphosphate + H(+). It functions in the pathway aminoacyl-tRNA biosynthesis; selenocysteinyl-tRNA(Sec) biosynthesis; L-seryl-tRNA(Sec) from L-serine and tRNA(Sec): step 1/1. Catalyzes the attachment of serine to tRNA(Ser). Is also able to aminoacylate tRNA(Sec) with serine, to form the misacylated tRNA L-seryl-tRNA(Sec), which will be further converted into selenocysteinyl-tRNA(Sec). The protein is Serine--tRNA ligase of Helicobacter pylori (strain J99 / ATCC 700824) (Campylobacter pylori J99).